The sequence spans 370 residues: Histidinol-phosphate aminotransferase (370 aa).

Lys220 bears the N6-(pyridoxal phosphate)lysine mark.

The protein belongs to the class-II pyridoxal-phosphate-dependent aminotransferase family. Histidinol-phosphate aminotransferase subfamily. Homodimer. The cofactor is pyridoxal 5'-phosphate.

The enzyme catalyses L-histidinol phosphate + 2-oxoglutarate = 3-(imidazol-4-yl)-2-oxopropyl phosphate + L-glutamate. It functions in the pathway amino-acid biosynthesis; L-histidine biosynthesis; L-histidine from 5-phospho-alpha-D-ribose 1-diphosphate: step 7/9. The polypeptide is Histidinol-phosphate aminotransferase (Granulibacter bethesdensis (strain ATCC BAA-1260 / CGDNIH1)).